The primary structure comprises 595 residues: Indole-3-acetic acid-amido synthetase GH3.3 (595 aa).

It belongs to the IAA-amido conjugating enzyme family.

Functionally, catalyzes the synthesis of indole-3-acetic acid (IAA)-amino acid conjugates, providing a mechanism for the plant to cope with the presence of excess auxin. Strongly reactive with Glu, Gln, Trp, Asp, Ala, Leu, Phe, Gly, Tyr, Met, Ile and Val. Little or no product formation with His, Ser, Thr, Arg, Lys, or Cys. Also active on pyruvic and butyric acid analogs of IAA, PAA and the synthetic auxin naphthaleneacetic acid (NAA). The two chlorinated synthetic auxin herbicides 2,4-D and 3,6-dichloro-o-anisic acid (dicamba) cannot be used as substrates. The chain is Indole-3-acetic acid-amido synthetase GH3.3 (GH3.3) from Arabidopsis thaliana (Mouse-ear cress).